A 315-amino-acid chain; its full sequence is tRNA pseudouridine synthase B (315 aa).

The active-site Nucleophile is aspartate 47.

The protein belongs to the pseudouridine synthase TruB family. Type 1 subfamily.

The enzyme catalyses uridine(55) in tRNA = pseudouridine(55) in tRNA. Functionally, responsible for synthesis of pseudouridine from uracil-55 in the psi GC loop of transfer RNAs. This chain is tRNA pseudouridine synthase B, found in Shewanella pealeana (strain ATCC 700345 / ANG-SQ1).